A 121-amino-acid chain; its full sequence is MAKYRAGRINEEVKKAISSIIQNDIRDPRLTSMISVIKVDVTKDLRYAKAYVSILGDEAKKKETMDILKKSESFIRKELGYAVKLRYTPEVIIELDTSIEKGMHIDAILEKIKGSDKNDNR.

It belongs to the RbfA family. In terms of assembly, monomer. Binds 30S ribosomal subunits, but not 50S ribosomal subunits or 70S ribosomes.

It localises to the cytoplasm. Functionally, one of several proteins that assist in the late maturation steps of the functional core of the 30S ribosomal subunit. Associates with free 30S ribosomal subunits (but not with 30S subunits that are part of 70S ribosomes or polysomes). Required for efficient processing of 16S rRNA. May interact with the 5'-terminal helix region of 16S rRNA. The chain is Ribosome-binding factor A from Clostridium acetobutylicum (strain ATCC 824 / DSM 792 / JCM 1419 / IAM 19013 / LMG 5710 / NBRC 13948 / NRRL B-527 / VKM B-1787 / 2291 / W).